Reading from the N-terminus, the 310-residue chain is Malate dehydrogenase (310 aa).

Residues 7 to 13 and aspartate 34 each bind NAD(+); that span reads GAAGGIG. Substrate is bound by residues arginine 81 and arginine 87. NAD(+) is bound by residues asparagine 94 and 117-119; that span reads ITN. Positions 119 and 153 each coordinate substrate. Histidine 177 serves as the catalytic Proton acceptor. An NAD(+)-binding site is contributed by methionine 227.

Belongs to the LDH/MDH superfamily. MDH type 1 family. Homodimer.

The catalysed reaction is (S)-malate + NAD(+) = oxaloacetate + NADH + H(+). Functionally, catalyzes the reversible oxidation of malate to oxaloacetate. The sequence is that of Malate dehydrogenase from Vibrio vulnificus (strain YJ016).